The following is a 417-amino-acid chain: Hydroxysteroid dehydrogenase-like protein 2 (417 aa).

Residues 17–23 (GASRGIG), Lys42, and Asp74 contribute to the NADP(+) site. The active-site Proton acceptor is the Tyr168. Lys172 is a binding site for NADP(+). Residues 306-414 (SSPLQETFKA…KLEKILGQMN (109 aa)) enclose the SCP2 domain.

This sequence belongs to the short-chain dehydrogenases/reductases (SDR) family.

The protein resides in the peroxisome. It is found in the mitochondrion. In terms of biological role, has apparently no steroid dehydrogenase activity. Might act as a metabolic regulator that affects systemic adaptation to nutritional cues. The polypeptide is Hydroxysteroid dehydrogenase-like protein 2 (hsdl2) (Xenopus tropicalis (Western clawed frog)).